The primary structure comprises 301 residues: Putative hydro-lyase C5H10.01 (301 aa).

The protein belongs to the D-glutamate cyclase family.

The sequence is that of Putative hydro-lyase C5H10.01 from Schizosaccharomyces pombe (strain 972 / ATCC 24843) (Fission yeast).